A 123-amino-acid polypeptide reads, in one-letter code: Small ribosomal subunit protein uS12 (123 aa).

Asp89 carries the 3-methylthioaspartic acid modification.

The protein belongs to the universal ribosomal protein uS12 family. Part of the 30S ribosomal subunit. Contacts proteins S8 and S17. May interact with IF1 in the 30S initiation complex.

Its function is as follows. With S4 and S5 plays an important role in translational accuracy. In terms of biological role, interacts with and stabilizes bases of the 16S rRNA that are involved in tRNA selection in the A site and with the mRNA backbone. Located at the interface of the 30S and 50S subunits, it traverses the body of the 30S subunit contacting proteins on the other side and probably holding the rRNA structure together. The combined cluster of proteins S8, S12 and S17 appears to hold together the shoulder and platform of the 30S subunit. The chain is Small ribosomal subunit protein uS12 from Rhodopseudomonas palustris (strain HaA2).